A 718-amino-acid chain; its full sequence is Kinesin-2a (718 aa).

The region spanning 5 to 335 (NIKVIVRCRP…LRYADRAKQI (331 aa)) is the Kinesin motor domain. Residue 97 to 104 (GQTGAGKT) participates in ATP binding. Residues glycine 100, glycine 102, lysine 103, threonine 104, and tryptophan 105 each contribute to the ADP site. Threonine 104 is a binding site for Mg(2+). Residues 432–477 (SRKAADELEAKRRALAEAKQKRESELEQKEALNKEAIVTLTDLKSQ) are a coiled coil.

Belongs to the TRAFAC class myosin-kinesin ATPase superfamily. Kinesin family. Kinesin II subfamily. Monomer.

The protein localises to the cell projection. It localises to the cilium. Its subcellular location is the flagellum. The protein resides in the cytoplasm. It is found in the cytoskeleton. The protein localises to the flagellum axoneme. It localises to the flagellum basal body. Its function is as follows. Involved in anterograde intraflagellar transport (IFT). Involved in flagellar assembly. The polypeptide is Kinesin-2a (Giardia intestinalis (strain ATCC 50803 / WB clone C6) (Giardia lamblia)).